Here is an 867-residue protein sequence, read N- to C-terminus: Pentatricopeptide repeat-containing protein At2g39230, mitochondrial (867 aa).

The N-terminal 49 residues, 1 to 49 (MTTFMVSKRFRPPIFLHRFINPKPISSQTRFLHPPDNQSRDISDSTTET), are a transit peptide targeting the mitochondrion. Residues 27–74 (SQTRFLHPPDNQSRDISDSTTETISTLEFPHKTSVPNHSPLTSTSETE) are disordered. Over residues 60 to 72 (SVPNHSPLTSTSE) the composition is skewed to polar residues. PPR repeat units follow at residues 168–202 (TPRAFNYLLNAYIRNKRMDYAVDCFGLMVDRKVVP), 203–237 (FVPYVNNVLSSLVRSNLIDEAKEIYNKMVLIGVAG), 238–272 (DNVTTQLLMRASLRERKPEEAVKIFRRVMSRGAEP), 273–307 (DGLLFSLAVQAACKTPDLVMALDLLREMRGKLGVP), 309–343 (SQETYTSVIVAFVKEGNMEEAVRVMDEMVGFGIPM), 344–378 (SVIAATSLVNGYCKGNELGKALDLFNRMEEEGLAP), 379–413 (DKVMFSVMVEWFCKNMEMEKAIEFYMRMKSVRIAP), 414–444 (SSVLVHTMIQGCLKAESPEAALEIFNDSFES), 448–482 (HGFMCNKIFLLFCKQGKVDAATSFLKMMEQKGIEP), 483–517 (NVVFYNNMMLAHCRMKNMDLARSIFSEMLEKGLEP), 518–552 (NNFTYSILIDGFFKNKDEQNAWDVINQMNASNFEA), 553–588 (NEVIYNTIINGLCKVGQTSKAKEMLQNLIKEKRYSM), 589–623 (SCTSYNSIIDGFVKVGDTDSAVETYREMSENGKSP), 624–658 (NVVTFTSLINGFCKSNRMDLALEMTHEMKSMELKL), 659–693 (DLPAYGALIDGFCKKNDMKTAYTLFSELPELGLMP), 694–728 (NVSVYNSLISGFRNLGKMDAAIDLYKKMVNDGISC), 729–763 (DLFTYTTMIDGLLKDGNINLASDLYSELLDLGIVP), 764–798 (DEILHMVLVNGLSKKGQFLKASKMLEEMKKKDVTP), and 799–833 (NVLLYSTVIAGHHREGNLNEAFRLHDEMLEKGIVH).

It belongs to the PPR family. P subfamily. In terms of tissue distribution, expressed in lateral organ junctions and shoot apical meristem (SAM).

Its subcellular location is the mitochondrion. Functionally, involved in lateral organ development and boundary demarcation. The chain is Pentatricopeptide repeat-containing protein At2g39230, mitochondrial (LOJ) from Arabidopsis thaliana (Mouse-ear cress).